The primary structure comprises 507 residues: Cytochrome P450 monooxygenase tpeC (507 aa).

Residues 24-44 traverse the membrane as a helical segment; the sequence is TLAIALIVGFVILKAIYNVFF. A heme-binding site is contributed by C449.

This sequence belongs to the cytochrome P450 family. Heme serves as cofactor.

Its subcellular location is the membrane. It functions in the pathway secondary metabolite biosynthesis. Cytochrome P450 monooxygenase; part of the gene cluster that mediates the biosynthesis of polyesters containing 2,4-dihydroxy-6-(2-hydroxypropyl)benzoate and 3-hydroxybutyrate moieties, such as talapolyester G, 15G256beta and 15G256beta-2; as well as to oxidized derivatives such as 15G256alpha. The biosynthesis of the polyesters probably starts with the formation of the diketide 3-hydroxybutyryl-S-ACP catalyzed by the partially reducing polyketide synthase tpeA. The acceptance of 3-hydroxybutyryl by the non-reducing polyketide synthase tpeB would initiate further elongation and cyclization, catalyzed by KS and PT, respectively, to form 2,4-dihydroxy-6-(2-hydroxyn-propyl)benzoyl-S-ACP intermediate. The TE domain could catalyze lactonization at this step to yield 6-hydroxymellein as a derailment product. The polyesterification process maybe occurs when additional molecules of 3-hydroxybutyryl are transferred to tpeB. Following the first esterification step, an intramolecular cyclization catalyzed by the TE domain of tpeB would give talarodioxadione 1, whereas the ethyl esterification of talapolyester G perhaps happens spontaneously. Further oxidation by the cytochrome P450 monooxygenase tpeC then leads to the formation of oxidized derivatives. In Talaromyces stipitatus (strain ATCC 10500 / CBS 375.48 / QM 6759 / NRRL 1006) (Penicillium stipitatum), this protein is Cytochrome P450 monooxygenase tpeC.